A 97-amino-acid polypeptide reads, in one-letter code: Sperm protein associated with the nucleus on the X chromosome A (97 aa).

Positions 1-49 are disordered; the sequence is MDKQSSAGGVKRSVPCDSNEANEMMPETPTGDSDPQPAPKKMKTSESST. The Nuclear localization signal signature appears at 37 to 45; sequence PAPKKMKTS.

It belongs to the SPAN-X family. In terms of tissue distribution, detected in testis and sperm.

It localises to the cytoplasm. The protein localises to the nucleus. This chain is Sperm protein associated with the nucleus on the X chromosome A, found in Homo sapiens (Human).